We begin with the raw amino-acid sequence, 122 residues long: Holo-[acyl-carrier-protein] synthase (122 aa).

Mg(2+) is bound by residues aspartate 9 and glutamate 58.

This sequence belongs to the P-Pant transferase superfamily. AcpS family. It depends on Mg(2+) as a cofactor.

The protein resides in the cytoplasm. It carries out the reaction apo-[ACP] + CoA = holo-[ACP] + adenosine 3',5'-bisphosphate + H(+). In terms of biological role, transfers the 4'-phosphopantetheine moiety from coenzyme A to a Ser of acyl-carrier-protein. This is Holo-[acyl-carrier-protein] synthase from Chlamydia felis (strain Fe/C-56) (Chlamydophila felis).